We begin with the raw amino-acid sequence, 306 residues long: Palmitoyl-protein thioesterase ABHD10, mitochondrial (306 aa).

The transit peptide at 1 to 52 directs the protein to the mitochondrion; that stretch reads MAVARLAAVAAWVPCRSWGWAAVPFGPHRGLSVLLARIPQRAPRWLPACRQK. The AB hydrolase-1 domain maps to 78-178; it reads IIFIPGYLSY…VVALIGVATA (101 aa). Residues Ser-152, Asp-249, and His-279 each act as charge relay system in the active site.

Belongs to the AB hydrolase superfamily.

The protein localises to the mitochondrion. The enzyme catalyses S-hexadecanoyl-L-cysteinyl-[protein] + H2O = L-cysteinyl-[protein] + hexadecanoate + H(+). It catalyses the reaction mycophenolic acid O-acyl-beta-D-glucuronide + H2O = mycophenolate + D-glucuronate + H(+). Inhibited by palmostatin-B. In terms of biological role, acts as an acyl-protein thioesterase that hydrolyzes fatty acids from acylated residues in proteins. Regulates the mitochondrial S-depalmitoylation of the nucleophilic active site residue of peroxiredoxin-5/PRDX5, a key antioxidant protein, therefore modulating mitochondrial antioxidant ability. Also catalyzes the deglucuronidation of mycophenolic acid acyl-glucuronide, an active metabolite of the immunosuppressant drug mycophenolate. The sequence is that of Palmitoyl-protein thioesterase ABHD10, mitochondrial from Homo sapiens (Human).